We begin with the raw amino-acid sequence, 137 residues long: Large ribosomal subunit protein uL16 (137 aa).

The protein belongs to the universal ribosomal protein uL16 family. As to quaternary structure, part of the 50S ribosomal subunit.

Functionally, binds 23S rRNA and is also seen to make contacts with the A and possibly P site tRNAs. This is Large ribosomal subunit protein uL16 from Maricaulis maris (strain MCS10) (Caulobacter maris).